Reading from the N-terminus, the 184-residue chain is NADH-quinone oxidoreductase subunit B (184 aa).

The [4Fe-4S] cluster site is built by Cys37, Cys38, Cys103, and Cys132.

The protein belongs to the complex I 20 kDa subunit family. NDH-1 is composed of 14 different subunits. Subunits NuoB, C, D, E, F, and G constitute the peripheral sector of the complex. [4Fe-4S] cluster is required as a cofactor.

The protein resides in the cell membrane. It carries out the reaction a quinone + NADH + 5 H(+)(in) = a quinol + NAD(+) + 4 H(+)(out). Functionally, NDH-1 shuttles electrons from NADH, via FMN and iron-sulfur (Fe-S) centers, to quinones in the respiratory chain. The immediate electron acceptor for the enzyme in this species is believed to be a menaquinone. Couples the redox reaction to proton translocation (for every two electrons transferred, four hydrogen ions are translocated across the cytoplasmic membrane), and thus conserves the redox energy in a proton gradient. The polypeptide is NADH-quinone oxidoreductase subunit B (Beutenbergia cavernae (strain ATCC BAA-8 / DSM 12333 / CCUG 43141 / JCM 11478 / NBRC 16432 / NCIMB 13614 / HKI 0122)).